The chain runs to 356 residues: Nitric oxide synthase oxygenase (356 aa).

Cysteine 63 provides a ligand contact to heme.

The protein belongs to the NOS family. Bacterial NOS oxygenase subfamily. As to quaternary structure, homodimer. Forms a complex with trpS2; one homodimer of trpS2 binds one homodimer of nos. Heme is required as a cofactor. The cofactor is (6S)-5,6,7,8-tetrahydrofolate.

It catalyses the reaction 3 reduced [flavodoxin] + 2 L-arginine + 4 O2 = 3 oxidized [flavodoxin] + 2 L-citrulline + 2 nitric oxide + 4 H2O + 5 H(+). Its activity is regulated as follows. Nitric oxide synthase activity is increased by trpS2. In terms of biological role, catalyzes the production of nitric oxide. The complex between TrpRS II and nitric oxide synthase oxygenase catalyzes the regioselective nitration of tryptophan at the 4-position. This Deinococcus radiodurans (strain ATCC 13939 / DSM 20539 / JCM 16871 / CCUG 27074 / LMG 4051 / NBRC 15346 / NCIMB 9279 / VKM B-1422 / R1) protein is Nitric oxide synthase oxygenase (nos).